We begin with the raw amino-acid sequence, 391 residues long: Elongation factor Tu 2 (391 aa).

The 192-residue stretch at 10 to 201 (KPHVNIGTIG…EVDNYIPTPE (192 aa)) folds into the tr-type G domain. Positions 19–26 (GHVDHGKT) are G1. 19–26 (GHVDHGKT) contacts GTP. Thr26 lines the Mg(2+) pocket. The G2 stretch occupies residues 55–59 (GITIS). Residues 76–79 (DCPG) are G3. GTP-binding positions include 76 to 80 (DCPGH) and 131 to 134 (NKVD). Residues 131-134 (NKVD) form a G4 region. The interval 169-171 (SAL) is G5.

The protein belongs to the TRAFAC class translation factor GTPase superfamily. Classic translation factor GTPase family. EF-Tu/EF-1A subfamily. As to quaternary structure, monomer.

It localises to the cytoplasm. It carries out the reaction GTP + H2O = GDP + phosphate + H(+). Functionally, GTP hydrolase that promotes the GTP-dependent binding of aminoacyl-tRNA to the A-site of ribosomes during protein biosynthesis. In Bartonella quintana (strain Toulouse) (Rochalimaea quintana), this protein is Elongation factor Tu 2.